Here is a 193-residue protein sequence, read N- to C-terminus: dTTP/UTP pyrophosphatase (193 aa).

The active-site Proton acceptor is the aspartate 75.

It belongs to the Maf family. YhdE subfamily. A divalent metal cation is required as a cofactor.

Its subcellular location is the cytoplasm. It catalyses the reaction dTTP + H2O = dTMP + diphosphate + H(+). The catalysed reaction is UTP + H2O = UMP + diphosphate + H(+). Nucleoside triphosphate pyrophosphatase that hydrolyzes dTTP and UTP. May have a dual role in cell division arrest and in preventing the incorporation of modified nucleotides into cellular nucleic acids. The protein is dTTP/UTP pyrophosphatase of Chlorobium phaeovibrioides (strain DSM 265 / 1930) (Prosthecochloris vibrioformis (strain DSM 265)).